A 482-amino-acid polypeptide reads, in one-letter code: Reduced viability upon starvation protein 167 (482 aa).

Serine 2 bears the N-acetylserine mark. The BAR domain maps to phenylalanine 17–glutamate 254. 2 coiled-coil regions span residues valine 31–leucine 64 and alanine 174–glutamine 204. Lysine 242 is covalently cross-linked (Glycyl lysine isopeptide (Lys-Gly) (interchain with G-Cter in ubiquitin)). Serine 299, serine 321, and serine 379 each carry phosphoserine; by FUS3 and PHO85. Positions leucine 382–serine 407 are disordered. The region spanning proline 421–asparagine 482 is the SH3 domain. Residue lysine 481 forms a Glycyl lysine isopeptide (Lys-Gly) (interchain with G-Cter in ubiquitin) linkage.

In terms of assembly, binds to actin. Interacts with ABP1, GYL1, GYP5, PCL2 and YBR108W. Phosphorylated redundantly by cyclin-dependent kinase PHO85 in association with PCL1,2-type cyclins or by MAP kinase FUS3. Phosphorylation inhibits interaction with complexes involved in actin cytoskeleton function.

It localises to the cytoplasm. It is found in the cytoskeleton. Component of a cytoskeletal structure that is required for the formation of endocytic vesicles at the plasma membrane level. Could be implicated in cytoskeletal reorganization in response to environmental stresses and could act in the budding site selection mechanism. The polypeptide is Reduced viability upon starvation protein 167 (RVS167) (Saccharomyces cerevisiae (strain ATCC 204508 / S288c) (Baker's yeast)).